Consider the following 629-residue polypeptide: tRNA uridine 5-carboxymethylaminomethyl modification enzyme MnmG (629 aa).

FAD-binding positions include 14–19 (GAGHAG), Val-126, and Ser-181. 273–287 (GPRYCPSIEDKVVRF) is a binding site for NAD(+). Gln-370 contacts FAD.

This sequence belongs to the MnmG family. In terms of assembly, homodimer. Heterotetramer of two MnmE and two MnmG subunits. Requires FAD as cofactor.

It is found in the cytoplasm. Its function is as follows. NAD-binding protein involved in the addition of a carboxymethylaminomethyl (cmnm) group at the wobble position (U34) of certain tRNAs, forming tRNA-cmnm(5)s(2)U34. The protein is tRNA uridine 5-carboxymethylaminomethyl modification enzyme MnmG of Bacillus cereus (strain ATCC 10987 / NRS 248).